Here is a 439-residue protein sequence, read N- to C-terminus: Tol-Pal system protein TolB (439 aa).

Residues 1-22 (MKKPLRWLAALTVLLLPLSALA) form the signal peptide.

This sequence belongs to the TolB family. As to quaternary structure, the Tol-Pal system is composed of five core proteins: the inner membrane proteins TolA, TolQ and TolR, the periplasmic protein TolB and the outer membrane protein Pal. They form a network linking the inner and outer membranes and the peptidoglycan layer.

The protein resides in the periplasm. Its function is as follows. Part of the Tol-Pal system, which plays a role in outer membrane invagination during cell division and is important for maintaining outer membrane integrity. In Xanthomonas oryzae pv. oryzae (strain KACC10331 / KXO85), this protein is Tol-Pal system protein TolB.